The primary structure comprises 213 residues: uncharacterized protein (213 aa).

This is an uncharacterized protein from Bacillus subtilis (strain 168).